The chain runs to 325 residues: Solute-binding protein RD1_1052 (325 aa).

An N-terminal signal peptide occupies residues 1-26; sequence MRLFTKIKGLAAVTCVAALASSAAFA. D-mannonate contacts are provided by residues Glu-75, 93–95, 148–151, Arg-171, and Asn-211; these read GES and RGPR. Residues Glu-75, 93 to 95, 148 to 151, Arg-171, and Asn-211 contribute to the L-galactonate site; these read GES and RGPR.

It belongs to the bacterial solute-binding protein 7 family. The complex is comprised of an extracytoplasmic solute-binding protein and a heteromeric permease formed by two transmembrane proteins.

It localises to the periplasm. In terms of biological role, solute-binding protein that binds L-galactonate and D-mannonate (in vitro). Probably part of a tripartite ATP-independent periplasmic (TRAP) transport system that mediates solute transport into the cytoplasm. In Roseobacter denitrificans (strain ATCC 33942 / OCh 114) (Erythrobacter sp. (strain OCh 114)), this protein is Solute-binding protein RD1_1052.